A 1358-amino-acid polypeptide reads, in one-letter code: Tenascin-R (1358 aa).

The N-terminal stretch at 1–31 (MGIDGETVVLKNMLIGVNLILLGSMLKPSEC) is a signal peptide. Positions 37 to 58 (TERAQRQTVEEEGGASSYNTSS) are disordered. N-linked (GlcNAc...) asparagine glycosylation occurs at N55. A coiled-coil region spans residues 127–157 (CASSSQVLQELLSRIEMLEREVSLLRDQCNT). An O-linked (Xyl...) (chondroitin sulfate) serine glycan is attached at S176. N-linked (GlcNAc...) asparagine glycans are attached at residues N180 and N198. 3 consecutive EGF-like domains span residues 188 to 199 (CICNEGWFGKNC), 219 to 230 (CICDSEYSGDDC), and 250 to 261 (CVCEEPYTGEDC). S271 is a glycosylation site (O-linked (Xyl...) (chondroitin sulfate) serine). N-linked (GlcNAc...) asparagine glycosylation occurs at N278. Residues 281 to 292 (CLCQEGYAGEDC) form the EGF-like 4 domain. Intrachain disulfides connect C297/C307 and C314/C323. S302 carries an O-linked (Xyl...) (chondroitin sulfate) serine glycan. The EGF-like 5 domain occupies 312–323 (CICEEGYQGPDC). 9 Fibronectin type-III domains span residues 328–420 (PPED…TPQG), 421–505 (LQFK…TVID), 506–597 (GPTQ…IDAP), 598–687 (KNLR…TELD), 688–777 (SPRD…FRPI), 778–865 (SHLH…TGID), 866–955 (PPKN…AMDS), 956–1042 (PMDL…TLLD), and 1043–1131 (PPDN…GGRV). 3 N-linked (GlcNAc...) asparagine glycosylation sites follow: N392, N470, and N581. Position 724 is a phosphoserine (S724). N791, N869, N874, N1036, N1046, and N1261 each carry an N-linked (GlcNAc...) asparagine glycan. The region spanning 1129–1344 (GRVFSHPQDC…FVEMKMRPYI (216 aa)) is the Fibrinogen C-terminal domain.

The protein belongs to the tenascin family. As to quaternary structure, interacts with BCAN and ACAN in a calcium-dependent manner. Interacts with SCN2B, PTPRZ1, and CSPG3. Forms oligomers. Isoforms 1 and 2 form respectively trimeric (tribrachion) and dimeric kink-armed rodlike structures, which are linked by disulfide bridges. Interacts with CNTN1, TNC and FN1. Post-translationally, contains N-linked oligosaccharides with a sulfated carbohydrate structures. Contains N-linked oligosaccharides, O-linked sialylated structures and O-linked chondroitin sulfate glycosaminoglycans. Brain-specific.

The protein resides in the secreted. The protein localises to the extracellular space. Its subcellular location is the extracellular matrix. In terms of biological role, neural extracellular matrix (ECM) protein involved in interactions with different cells and matrix components. Theses interactions can influence cellular behavior by either evoking a stable adhesion and differentiation, or repulsion and inhibition of neurite growth. Binding to cell surface gangliosides inhibits RGD-dependent integrin-mediated cell adhesion and results in an inhibition of PTK2/FAK1 (FAK) phosphorylation and cell detachment. Binding to membrane surface sulfatides results in a oligodendrocyte adhesion and differentiation. Interaction with CNTN1 induces a repulsion of neurons and an inhibition of neurite outgrowth. Interacts with SCN2B may play a crucial role in clustering and regulation of activity of sodium channels at nodes of Ranvier. TNR-linked chondroitin sulfate glycosaminoglycans are involved in the interaction with FN1 and mediates inhibition of cell adhesion and neurite outgrowth. The highly regulated addition of sulfated carbohydrate structure may modulate the adhesive properties of TNR over the course of development and during synapse maintenance. In Mus musculus (Mouse), this protein is Tenascin-R (Tnr).